A 570-amino-acid chain; its full sequence is Periplasmic trehalase (570 aa).

An N-terminal signal peptide occupies residues 1–34 (MIPPEIRRSVLLQKAIKLALAGTLLTFASFSATA). Substrate is bound by residues R159, 166–167 (WD), N203, 212–214 (RSQ), 284–286 (RPE), and G317. Catalysis depends on proton donor/acceptor residues D319 and E503. E518 contacts substrate. Residues 544–570 (KPCDSVPSTRPASLSATPTKTPSAATQ) form a disordered region. The segment covering 554 to 570 (PASLSATPTKTPSAATQ) has biased composition (low complexity).

It belongs to the glycosyl hydrolase 37 family. As to quaternary structure, monomer.

The protein resides in the periplasm. The enzyme catalyses alpha,alpha-trehalose + H2O = alpha-D-glucose + beta-D-glucose. In terms of biological role, provides the cells with the ability to utilize trehalose at high osmolarity by splitting it into glucose molecules that can subsequently be taken up by the phosphotransferase-mediated uptake system. This Salmonella dublin (strain CT_02021853) protein is Periplasmic trehalase.